Reading from the N-terminus, the 262-residue chain is Acyl-coenzyme A diphosphatase FITM2 (262 aa).

Topologically, residues methionine 1–tyrosine 23 are cytoplasmic. Residues leucine 24–leucine 44 form a helical membrane-spanning segment. Topologically, residues proline 45–asparagine 57 are lumenal. Residues valine 58–leucine 78 traverse the membrane as a helical segment. At threonine 79–arginine 93 the chain is on the cytoplasmic side. A helical transmembrane segment spans residues leucine 94–valine 114. The Lumenal portion of the chain corresponds to glutamate 115 to glycine 145. The helical transmembrane segment at phenylalanine 146–isoleucine 166 threads the bilayer. The active site involves histidine 155. Residues valine 167–histidine 185 are Cytoplasmic-facing. A helical transmembrane segment spans residues valine 186 to phenylalanine 206. At leucine 207–glutamine 218 the chain is on the lumenal side. Residue histidine 214 is part of the active site. A helical membrane pass occupies residues lysine 219 to leucine 239. Residues lysine 240–arginine 262 lie on the Cytoplasmic side of the membrane.

Belongs to the FIT family. FIT2 subfamily.

The protein localises to the endoplasmic reticulum membrane. The catalysed reaction is an acyl-CoA + H2O = an acyl-4'-phosphopantetheine + adenosine 3',5'-bisphosphate + 2 H(+). The enzyme catalyses (9Z)-octadecenoyl-CoA + H2O = S-(9Z-octadecenoyl)-4'-phosphopantetheine + adenosine 3',5'-bisphosphate + 2 H(+). It carries out the reaction (5Z,8Z,11Z,14Z)-eicosatetraenoyl-CoA + H2O = S-(5Z,8Z,11Z,14Z-eicosatetraenoyl)-4'-phosphopantetheine + adenosine 3',5'-bisphosphate + 2 H(+). It catalyses the reaction hexadecanoyl-CoA + H2O = S-hexadecanoyl-4'-phosphopantetheine + adenosine 3',5'-bisphosphate + 2 H(+). Its function is as follows. Fatty acyl-coenzyme A (CoA) diphosphatase that hydrolyzes fatty acyl-CoA to yield acyl-4'-phosphopantetheine and adenosine 3',5'-bisphosphate. Preferentially hydrolyzes unsaturated long-chain acyl-CoA substrates such as oleoyl-CoA/(9Z)-octadecenoyl-CoA and arachidonoyl-CoA/(5Z,8Z,11Z,14Z)-eicosatetraenoyl-CoA in the endoplasmic reticulum (ER) lumen. This catalytic activity is required for maintaining ER structure and for lipid droplets (LDs) biogenesis, which are lipid storage organelles involved in maintaining lipid and energy homeostasis. Directly binds to diacylglycerol (DAGs) and triacylglycerol, which is also important for LD biogenesis. May support directional budding of nacent LDs from the ER into the cytosol by reducing DAG levels at sites of LD formation. Plays a role in the regulation of cell morphology and cytoskeletal organization. The protein is Acyl-coenzyme A diphosphatase FITM2 of Sus scrofa (Pig).